A 632-amino-acid chain; its full sequence is tRNA endonuclease VMS1 (632 aa).

The segment at 72 to 96 (MRCSVCQMSFDSRNEQKAHYQTDYH) adopts a C2H2-type zinc-finger fold. The tract at residues 123 to 155 (HGIKSEDENSGGEQTSSDHEESEEASDRDPDLQ) is disordered. A VLRF1 domain is found at 232–392 (PMAISALFMV…KKAWCELSYL (161 aa)). Residue glutamine 295 is part of the active site. ANK repeat units lie at residues 470-500 (LTPT…DPTI) and 504-530 (LGRT…NLGE). 2 coiled-coil regions span residues 544 to 582 (LSRE…QRFA) and 608 to 632 (TDEQ…KKKY). Residues 578–589 (KQRFAKDAERGP) are compositionally biased toward basic and acidic residues. The tract at residues 578–632 (KQRFAKDAERGPGKKLTNIPSIQQQNLNSLTDEQRRRLMREQRARAAEERMKKKY) is disordered. Over residues 595–608 (NIPSIQQQNLNSLT) the composition is skewed to polar residues. Over residues 609–632 (DEQRRRLMREQRARAAEERMKKKY) the composition is skewed to basic and acidic residues.

The protein belongs to the ANKZF1/VMS1 family. Associates with 60S ribosomal subunit. Interacts with CDC48. Interacts with NPL4.

It is found in the cytoplasm. The protein localises to the mitochondrion. It localises to the endoplasmic reticulum membrane. Endonuclease that cleaves polypeptidyl-tRNAs downstream of the ribosome-associated quality control (RQC) pathway to release incompletely synthesized polypeptides for degradation. The RQC pathway disassembles aberrantly stalled translation complexes to recycle or degrade the constituent parts. VMS1 acts downstream disassembly of stalled ribosomes and specifically cleaves off the terminal 3'-CCA nucleotides universal to all tRNAs from polypeptidyl-tRNAs, releasing (1) ubiquitinated polypeptides from 60S ribosomal subunit for degradation by the ERAD pathway and (2) cleaved tRNAs for recycling. Component of an evolutionarily conserved system for ubiquitin-mediated mitochondria-associated protein degradation (MAD), which is necessary to maintain mitochondrial, cellular, and organismal viability. The polypeptide is tRNA endonuclease VMS1 (Saccharomyces cerevisiae (strain ATCC 204508 / S288c) (Baker's yeast)).